We begin with the raw amino-acid sequence, 355 residues long: Holliday junction branch migration complex subunit RuvB (355 aa).

Residues 4 to 190 are large ATPase domain (RuvB-L); it reads TDKLAAERII…FGIVARLEFY (187 aa). ATP is bound by residues L29, R30, G71, K74, T75, T76, 137–139, R180, Y190, and R227; that span reads EDY. T75 lines the Mg(2+) pocket. The segment at 191–261 is small ATPAse domain (RuvB-S); it reads DADQLSRIVQ…IADAALAMLD (71 aa). Residues 264-355 form a head domain (RuvB-H) region; sequence PVGFDLMDRK…QSIWDTPDAQ (92 aa). DNA contacts are provided by R300, R319, and R324.

Belongs to the RuvB family. Homohexamer. Forms an RuvA(8)-RuvB(12)-Holliday junction (HJ) complex. HJ DNA is sandwiched between 2 RuvA tetramers; dsDNA enters through RuvA and exits via RuvB. An RuvB hexamer assembles on each DNA strand where it exits the tetramer. Each RuvB hexamer is contacted by two RuvA subunits (via domain III) on 2 adjacent RuvB subunits; this complex drives branch migration. In the full resolvosome a probable DNA-RuvA(4)-RuvB(12)-RuvC(2) complex forms which resolves the HJ.

It is found in the cytoplasm. It catalyses the reaction ATP + H2O = ADP + phosphate + H(+). The RuvA-RuvB-RuvC complex processes Holliday junction (HJ) DNA during genetic recombination and DNA repair, while the RuvA-RuvB complex plays an important role in the rescue of blocked DNA replication forks via replication fork reversal (RFR). RuvA specifically binds to HJ cruciform DNA, conferring on it an open structure. The RuvB hexamer acts as an ATP-dependent pump, pulling dsDNA into and through the RuvAB complex. RuvB forms 2 homohexamers on either side of HJ DNA bound by 1 or 2 RuvA tetramers; 4 subunits per hexamer contact DNA at a time. Coordinated motions by a converter formed by DNA-disengaged RuvB subunits stimulates ATP hydrolysis and nucleotide exchange. Immobilization of the converter enables RuvB to convert the ATP-contained energy into a lever motion, pulling 2 nucleotides of DNA out of the RuvA tetramer per ATP hydrolyzed, thus driving DNA branch migration. The RuvB motors rotate together with the DNA substrate, which together with the progressing nucleotide cycle form the mechanistic basis for DNA recombination by continuous HJ branch migration. Branch migration allows RuvC to scan DNA until it finds its consensus sequence, where it cleaves and resolves cruciform DNA. This chain is Holliday junction branch migration complex subunit RuvB, found in Burkholderia multivorans (strain ATCC 17616 / 249).